A 63-amino-acid chain; its full sequence is Cecropin-1 (63 aa).

Residues 1–21 (MNFNKVFILVAIVIAIFAGQT) form the signal peptide. A propeptide spanning residues 22–23 (EA) is cleaved from the precursor. Arginine 62 is subject to Arginine amide.

This sequence belongs to the cecropin family.

Its subcellular location is the secreted. In terms of biological role, cecropins have lytic and antibacterial activity against several Gram-positive and Gram-negative bacteria. The protein is Cecropin-1 (CEC1) of Ceratitis capitata (Mediterranean fruit fly).